The following is a 277-amino-acid chain: 3-methyl-2-oxobutanoate hydroxymethyltransferase (277 aa).

Mg(2+) is bound by residues aspartate 53 and aspartate 96. 3-methyl-2-oxobutanoate-binding positions include 53-54 (DS), aspartate 96, and lysine 126. A Mg(2+)-binding site is contributed by glutamate 128. Residue glutamate 195 is the Proton acceptor of the active site.

The protein belongs to the PanB family. As to quaternary structure, homodecamer; pentamer of dimers. Mg(2+) serves as cofactor.

Its subcellular location is the cytoplasm. The catalysed reaction is 3-methyl-2-oxobutanoate + (6R)-5,10-methylene-5,6,7,8-tetrahydrofolate + H2O = 2-dehydropantoate + (6S)-5,6,7,8-tetrahydrofolate. The protein operates within cofactor biosynthesis; (R)-pantothenate biosynthesis; (R)-pantoate from 3-methyl-2-oxobutanoate: step 1/2. Functionally, catalyzes the reversible reaction in which hydroxymethyl group from 5,10-methylenetetrahydrofolate is transferred onto alpha-ketoisovalerate to form ketopantoate. This Chlorobium luteolum (strain DSM 273 / BCRC 81028 / 2530) (Pelodictyon luteolum) protein is 3-methyl-2-oxobutanoate hydroxymethyltransferase.